A 698-amino-acid chain; its full sequence is Vertnin (698 aa).

It belongs to the vertnin family.

It localises to the nucleus. In terms of biological role, acts as a transcription factor that regulates development of thoracic vertebrae. This is Vertnin (VRTN) from Sus scrofa (Pig).